The sequence spans 61 residues: Small ribosomal subunit protein uS14 (61 aa).

Cysteine 24, cysteine 27, cysteine 40, and cysteine 43 together coordinate Zn(2+).

Belongs to the universal ribosomal protein uS14 family. Zinc-binding uS14 subfamily. As to quaternary structure, part of the 30S ribosomal subunit. Contacts proteins S3 and S10. Zn(2+) serves as cofactor.

Its function is as follows. Binds 16S rRNA, required for the assembly of 30S particles and may also be responsible for determining the conformation of the 16S rRNA at the A site. This is Small ribosomal subunit protein uS14 from Trichlorobacter lovleyi (strain ATCC BAA-1151 / DSM 17278 / SZ) (Geobacter lovleyi).